We begin with the raw amino-acid sequence, 209 residues long: Outer-membrane lipoprotein carrier protein (209 aa).

An N-terminal signal peptide occupies residues 1-22; sequence MKKLLLTLAMVPAVLFSPTAWG.

This sequence belongs to the LolA family. In terms of assembly, monomer.

The protein resides in the periplasm. Its function is as follows. Participates in the translocation of lipoproteins from the inner membrane to the outer membrane. Only forms a complex with a lipoprotein if the residue after the N-terminal Cys is not an aspartate (The Asp acts as a targeting signal to indicate that the lipoprotein should stay in the inner membrane). The polypeptide is Outer-membrane lipoprotein carrier protein (Alcanivorax borkumensis (strain ATCC 700651 / DSM 11573 / NCIMB 13689 / SK2)).